A 166-amino-acid chain; its full sequence is Succinate dehydrogenase assembly factor 2, mitochondrial (166 aa).

The transit peptide at 1–29 (MAVVAVFPALARMLAVSRRRLVSPSLSMT) directs the protein to the mitochondrion.

Belongs to the SDHAF2 family. Interacts with SDHA within the SDH catalytic dimer.

It is found in the mitochondrion matrix. Its function is as follows. Plays an essential role in the assembly of succinate dehydrogenase (SDH), an enzyme complex (also referred to as respiratory complex II) that is a component of both the tricarboxylic acid (TCA) cycle and the mitochondrial electron transport chain, and which couples the oxidation of succinate to fumarate with the reduction of ubiquinone (coenzyme Q) to ubiquinol. Required for flavinylation (covalent attachment of FAD) of the flavoprotein subunit SDHA of the SDH catalytic dimer. This chain is Succinate dehydrogenase assembly factor 2, mitochondrial, found in Bos taurus (Bovine).